The chain runs to 258 residues: Phosphoadenosine 5'-phosphosulfate reductase (258 aa).

Residue Cys244 is the Nucleophile; cysteine thiosulfonate intermediate of the active site.

This sequence belongs to the PAPS reductase family. CysH subfamily.

It is found in the cytoplasm. It catalyses the reaction [thioredoxin]-disulfide + sulfite + adenosine 3',5'-bisphosphate + 2 H(+) = [thioredoxin]-dithiol + 3'-phosphoadenylyl sulfate. It functions in the pathway sulfur metabolism; hydrogen sulfide biosynthesis; sulfite from sulfate: step 3/3. Its function is as follows. Catalyzes the formation of sulfite from phosphoadenosine 5'-phosphosulfate (PAPS) using thioredoxin as an electron donor. The polypeptide is Phosphoadenosine 5'-phosphosulfate reductase (Vibrio vulnificus (strain CMCP6)).